We begin with the raw amino-acid sequence, 396 residues long: Tryptophan synthase beta chain (396 aa).

Lys86 is modified (N6-(pyridoxal phosphate)lysine).

This sequence belongs to the TrpB family. As to quaternary structure, tetramer of two alpha and two beta chains. It depends on pyridoxal 5'-phosphate as a cofactor.

It catalyses the reaction (1S,2R)-1-C-(indol-3-yl)glycerol 3-phosphate + L-serine = D-glyceraldehyde 3-phosphate + L-tryptophan + H2O. Its pathway is amino-acid biosynthesis; L-tryptophan biosynthesis; L-tryptophan from chorismate: step 5/5. Functionally, the beta subunit is responsible for the synthesis of L-tryptophan from indole and L-serine. This is Tryptophan synthase beta chain from Proteus mirabilis (strain HI4320).